Here is a 1056-residue protein sequence, read N- to C-terminus: PAX-interacting protein 1 (1056 aa).

BRCT domains follow at residues 8 to 93 (VPEE…GFSP) and 94 to 183 (ESCQ…FYHP). The tract at residues 94–183 (ESCQIFFGLT…RRKDEAFYHP (90 aa)) is interaction with PAGR1. The segment covering 188–205 (YEEEEEEEEEGDNEEQDS) has biased composition (acidic residues). Disordered regions lie at residues 188–276 (YEEE…QRRL), 393–412 (THVL…HPAL), and 419–486 (MQLQ…FQQQ). Residues 214 to 223 (SSVASSAVAS) are compositionally biased toward low complexity. Residues serine 223 and serine 230 each carry the phosphoserine modification. 3 stretches are compositionally biased toward low complexity: residues 396 to 412 (LQQH…HPAL), 419 to 435 (MQLQ…QQQP), and 445 to 486 (QFPQ…FQQQ). The interval 577–1056 (QLFGHDPAVE…TLDYESYKFN (480 aa)) is interaction with TP53BP1. BRCT domains lie at 588–681 (PEES…RALH), 688–776 (PGGK…VQYS), 853–934 (TPLV…NYIL), and 955–989 (HVSP…GGKV). The Nuclear localization signal signature appears at 655 to 672 (RKRCVTAHWLNTVLKKKK).

In terms of assembly, interacts with the C-terminal transactivation domain of PAX2. Forms a constitutive complex with PAGR1 independently of the MLL2/MLL3 complex. Interacts with TP53BP1 (when phosphorylated at the N-terminus by ATM). Interacts with HLTF. Component of the KMT2 family MLL2/MLL3 complex (also named ASCOM complex), at least composed of the HMTs KMT2D and/or KMT2C, the common subunits ASH2L, RBBP5, WDR5 and DPY30, and the complex type-specific subunits PAXIP1/PTIP, PAGR1, NCOA6 and KDM6A; required for the association of PAGR1 with the MLL2/MLL3 complex. Interacts with NUPR1; this interaction prevents PAXIP1 inhibition of PAX2 transcription factor activity. In terms of tissue distribution, expression detected in all tissues examined, including brain stem, cerebellum, cortex, heart, spleen, kidney, liver, thymus and lung.

Its subcellular location is the nucleus matrix. The protein resides in the chromosome. Involved in DNA damage response and in transcriptional regulation through histone methyltransferase (HMT) complexes such as the MLL2/MLL3 complex. Plays a role in early development. In DNA damage response is required for cell survival after ionizing radiation. In vitro shown to be involved in the homologous recombination mechanism for the repair of double-strand breaks (DSBs). Its localization to DNA damage foci requires Rnf8 and Ube2n. Recruits Tp53bp1 to DNA damage foci and, at least in particular repair processes, effective DNA damage response appears to require the association with Tp53bp1 phosphorylated by Atm. Together with Tp53bp1 regulates Atm association. Proposed to recruit Pagr1 to sites of DNA damage and the Pagr1:Paxip1 complex is required for cell survival in response to DNA damage independently of the MLL2/MLL3 complex. However, this function has been questioned. Promotes ubiquitination of PCNA following UV irradiation and may regulate recruitment of polymerase eta and Rad51 to chromatin after DNA damage. Proposed to be involved in transcriptional regulation by linking MLL-containing histone methyltransferase (HMT) complexes to gene promoters by interacting with promoter-bound transcription factors such as Pax2. Associates with gene promoters that are known to be regulated by Kmt2d/Mll2. During immunoglobulin class switching in activated B-cells is involved in trimethylation of histone H3 at 'Lys-4' and in transcription initiation of downstream switch regions at the immunoglobulin heavy-chain (Igh) locus; this function appears to involve the recruitment of MLL-containing HMT complexes. Conflictingly, its function in transcriptional regulation during immunoglobulin class switching is reported to be independent of the MLL2/MLL3 complex. This is PAX-interacting protein 1 (Paxip1) from Mus musculus (Mouse).